Here is a 386-residue protein sequence, read N- to C-terminus: 3-ketoacyl-CoA thiolase (386 aa).

Residue Cys-91 is the Acyl-thioester intermediate of the active site. Residues His-342 and Cys-372 each act as proton acceptor in the active site.

This sequence belongs to the thiolase-like superfamily. Thiolase family. As to quaternary structure, heterotetramer of two alpha chains (FadB) and two beta chains (FadA).

Its subcellular location is the cytoplasm. The enzyme catalyses an acyl-CoA + acetyl-CoA = a 3-oxoacyl-CoA + CoA. The protein operates within lipid metabolism; fatty acid beta-oxidation. Functionally, catalyzes the final step of fatty acid oxidation in which acetyl-CoA is released and the CoA ester of a fatty acid two carbons shorter is formed. This Pseudoalteromonas atlantica (strain T6c / ATCC BAA-1087) protein is 3-ketoacyl-CoA thiolase.